A 1547-amino-acid polypeptide reads, in one-letter code: MEMLTIDDRSHQFAYPVRWIETQHHILSELDSERVVEVGPANILTNMMKKTWEQQFANIDQALGIERKFFGPRDVFFPPNRENMDMLRAASKKTLPEAHPPPPIDSHQEPSTQTQATHRSAGVPVSLPQQIATNIPPAILEDVSLPVSTIVRSLVAMKLRKRSDDISEDQTINRLVGGRSTLMNEILGDLHAEFPGHVPERPDDIPIKDLGETMSIGHNGRLGKCTASLVNKMISSKMPGNWGQSSVRQFLQQKWGLAPMRQDAFLLLAVEKQPATRLSTPDSVDQFLVDIATEYFKKEGMSIPQATQQENSSQDSTARIVDVQGLRTAAVVDTAMVKDIIEVLKGYSNQQGNALEATMPHHTIDASHNASEPVDLWLTEHGDEYAAGIQPMFDGQKERLYDSYWNWIHQDITELVTLSRADDSDSYPGLVGLTMRILNKICDRSLDHLSYAITQAKISGSRNPIHIQTLQSVYESSLIFKAKNPIFLNRTGGDTTARYTGHDGLVSSLMKHVYDGFIPKDTLPLDIPVGKLTGQGFVISPTHTKMFATDVDRSRVLGLTFVGKNVLITGAGKNSIGLGILRHLLSGGARVIVTTSSYTSKTTRMYQELYAKHGSRGSILRLIPFNQGSWHDVQGLTEWIYKDESWDLDFIIPFAAVPERGRSLENLDSGSELAHRVMLTNLLRLLGGISRNKRSRGIVTRPATVLLPFSPNHGILGNDGLYSESKVSLEILLNKWASESWADFLSLMGVIIGWTRGTGLMAENDEIADAVEKLGAKTFSSDEMAGYIATLMGGTITTECQKEPLVVDLGGGLSRIQNLKGQLADARKALRESAELQRAVAEANLRQSISISGETSRKTSSSTTLHPRISLKLSWPQLPDYNQDISPLSDSLLDMLDLSRVVVITGFSELGPHGNSRTRWELERNGTLSPEGCAELAWMMGLIQHHSGISKDGSPFSGWMDSTTKELVEDFDILSRYESRVLKHTGIRKIEPDICDSGYDPERKESLQEIVLQRDLPAFESTAEVADDMMRKHGDRVAVTNGTSDGMRLVQLKAGAVIWVPRASRFNRTVAGQIPSGWSAKRYGISDEIIEQVDPVTLFSLVCTVEALLSSGITDPYEWYQHIHISELGNCIGSSMGGLSSLKKMHRDRYLDRPVKGDILQETFINTTAAWINMLLFSSAGPIKTPVGACATSLESLDTGRDLIVAKKAKIVLVGGVEDFVEDVSYEFGSMKATCDTEAEIRHGRSPDEMSRPMASSRAGFVEAQGCGIQVLTSAELALKMGLPIYGIVAYTNMSADKIGRSVPAAGRGVLTNAREPAHIRGPETTYNVLSRSLLNLTHRRQMLQERRSQISAFVTDSNRLLDEEIANLEQNSDFTQEDITRFRLQQLRFIHEEASRQEADAAFALGNEFWKSGSNQAVSPIRGSLAAWGLDVDDICVASLHGKTLQVEGDHSCIKACSVTSFGFGQKGSQAILIHPRYLFATISKTQYEEYIAKNSIRLKRASQTYSEGIINGDLVSKFIKEHQPYPAQDEEAWLLNPAMRLKNFS.

The tract at residues 94–121 (TLPEAHPPPPIDSHQEPSTQTQATHRSA) is disordered. The span at 109–118 (EPSTQTQATH) shows a compositional bias: polar residues. Positions 145-221 (LPVSTIVRSL…ETMSIGHNGR (77 aa)) constitute a Carrier domain. The residue at position 180 (Ser-180) is an O-(pantetheine 4'-phosphoryl)serine. The tract at residues 563 to 798 (GKNVLITGAG…ATLMGGTITT (236 aa)) is ketoreductase (KR) domain. The Ketosynthase family 3 (KS3) domain maps to 1004–1476 (KESLQEIVLQ…QKGSQAILIH (473 aa)). Residues Cys-1190 and His-1442 each act as for beta-ketoacyl synthase activity in the active site.

It belongs to the thiolase-like superfamily. Fungal fatty acid synthetase subunit alpha family. Pantetheine 4'-phosphate is required as a cofactor.

The enzyme catalyses acetyl-CoA + n malonyl-CoA + 2n NADPH + 4n H(+) = a long-chain-acyl-CoA + n CoA + n CO2 + 2n NADP(+).. It catalyses the reaction a fatty acyl-[ACP] + malonyl-[ACP] + H(+) = a 3-oxoacyl-[ACP] + holo-[ACP] + CO2. The catalysed reaction is a (3R)-hydroxyacyl-[ACP] + NADP(+) = a 3-oxoacyl-[ACP] + NADPH + H(+). The protein operates within mycotoxin biosynthesis; HC-toxin biosynthesis. Its function is as follows. Fatty acid synthase alpha subunit, part of the diffuse TOX2 gene cluster that mediates the biosynthesis of the HC-toxin, cyclic tetrapeptide of structure cyclo(D-Pro-L-Ala-D-Ala-L-Aeo), where Aeo stands for 2-amino-9,10-epoxi-8-oxodecanoic acid. HC-toxin is a determinant of specificity and virulence in the interaction between the producing fungus and its host, maize. TOXH contribute to the synthesis of the decanoic backbone of 2-amino-9,10-epoxi-8-oxodecanoic acid, an essential precursor for the production of the major forms of HC-toxin by the non-ribosomal peptide synthetase HTS1. The chain is Fatty acid synthase subunit alpha from Cochliobolus carbonum (Maize leaf spot fungus).